A 626-amino-acid chain; its full sequence is Chaperone protein HtpG (626 aa).

The segment at 1 to 341 (MAKKEFKAES…SEDLSLNISR (341 aa)) is a; substrate-binding. The segment at 342–552 (EMLQHDRQLK…DGEVTIEMEK (211 aa)) is b. The segment at 553–626 (ILNAMPDSQN…FTNNICKVMV (74 aa)) is c.

Belongs to the heat shock protein 90 family. As to quaternary structure, homodimer.

The protein localises to the cytoplasm. Its function is as follows. Molecular chaperone. Has ATPase activity. This is Chaperone protein HtpG from Bacillus subtilis (strain 168).